A 300-amino-acid polypeptide reads, in one-letter code: Movement protein (300 aa).

It belongs to the alfamovirus movement protein family.

The protein resides in the host cell junction. It localises to the host plasmodesma. In terms of biological role, transports viral genome to neighboring plant cells directly through plasmosdesmata, without any budding. The movement protein allows efficient cell to cell propagation, by bypassing the host cell wall barrier. Acts by forming a tubular structure at the host plasmodesmata, enlarging it enough to allow free passage of virion capsids. The sequence is that of Movement protein from Alfalfa mosaic virus (AMV).